The sequence spans 570 residues: Sulfite reductase [NADPH] hemoprotein beta-component (570 aa).

[4Fe-4S] cluster is bound by residues C434, C440, C479, and C483. C483 contributes to the siroheme binding site.

This sequence belongs to the nitrite and sulfite reductase 4Fe-4S domain family. Alpha(8)-beta(8). The alpha component is a flavoprotein, the beta component is a hemoprotein. It depends on siroheme as a cofactor. The cofactor is [4Fe-4S] cluster.

The enzyme catalyses hydrogen sulfide + 3 NADP(+) + 3 H2O = sulfite + 3 NADPH + 4 H(+). Its pathway is sulfur metabolism; hydrogen sulfide biosynthesis; hydrogen sulfide from sulfite (NADPH route): step 1/1. Functionally, component of the sulfite reductase complex that catalyzes the 6-electron reduction of sulfite to sulfide. This is one of several activities required for the biosynthesis of L-cysteine from sulfate. In Salmonella arizonae (strain ATCC BAA-731 / CDC346-86 / RSK2980), this protein is Sulfite reductase [NADPH] hemoprotein beta-component.